A 179-amino-acid chain; its full sequence is Large ribosomal subunit protein uL5 (179 aa).

It belongs to the universal ribosomal protein uL5 family. As to quaternary structure, part of the 50S ribosomal subunit; part of the 5S rRNA/L5/L18/L25 subcomplex. Contacts the 5S rRNA and the P site tRNA. Forms a bridge to the 30S subunit in the 70S ribosome.

In terms of biological role, this is one of the proteins that bind and probably mediate the attachment of the 5S RNA into the large ribosomal subunit, where it forms part of the central protuberance. In the 70S ribosome it contacts protein S13 of the 30S subunit (bridge B1b), connecting the 2 subunits; this bridge is implicated in subunit movement. Contacts the P site tRNA; the 5S rRNA and some of its associated proteins might help stabilize positioning of ribosome-bound tRNAs. This chain is Large ribosomal subunit protein uL5, found in Syntrophus aciditrophicus (strain SB).